Consider the following 317-residue polypeptide: MLTVPFEEPDMMRESQFGATFTRQEDVRTLSSAELKEAEDDNTDREEEEEREEDENGLPKKKGPRKKKSEGRGDRVKMRRQEANARERSRMHGLNDALESLRKVVPCYSKTQKLSKIETLRLAKNYIWALSETLSAGKRPDLLAFVQTLCKGLSQPTTNLVAGCLQLNARNFLTDHNGDVSFSGRPAYDSLYPYPNAEMATPTGLSSGTRESVKPFRPYNYYASYESYYDSASPESSSPHFDGQMSPPINYNGIFSLKKHDEQVEYSKNCHYGMRYCNVPGRGSMYRVSPDSHFPYDLHPRSQSFQSQDELNTGYHN.

Disordered stretches follow at residues 1-90 and 297-317; these read MLTV…ERSR and DLHPRSQSFQSQDELNTGYHN. Acidic residues predominate over residues 37 to 56; sequence EAEDDNTDREEEEEREEDEN. Over residues 59-69 the composition is skewed to basic residues; sequence PKKKGPRKKKS. Positions 65-70 match the Nuclear localization signal motif; that stretch reads RKKKSE. Residues 70 to 90 show a composition bias toward basic and acidic residues; sequence EGRGDRVKMRRQEANARERSR. The 53-residue stretch at 78–130 folds into the bHLH domain; that stretch reads MRRQEANARERSRMHGLNDALESLRKVVPCYSKTQKLSKIETLRLAKNYIWAL. A compositionally biased stretch (polar residues) spans 301-317; it reads RSQSFQSQDELNTGYHN.

As to quaternary structure, efficient DNA binding requires dimerization with another bHLH protein. As to expression, embryonic olfactory bulbs and olfactory placodes. In adult, expressed in brain and eye.

Its subcellular location is the nucleus. Its function is as follows. Differentiation factor required for neurogenesis. Does not act as an upstream activator of isl1. The sequence is that of Neurogenic differentiation factor 6-B from Danio rerio (Zebrafish).